Reading from the N-terminus, the 466-residue chain is Asparagine--tRNA ligase (466 aa).

This sequence belongs to the class-II aminoacyl-tRNA synthetase family. As to quaternary structure, homodimer.

It localises to the cytoplasm. It catalyses the reaction tRNA(Asn) + L-asparagine + ATP = L-asparaginyl-tRNA(Asn) + AMP + diphosphate + H(+). The protein is Asparagine--tRNA ligase of Shewanella putrefaciens (strain CN-32 / ATCC BAA-453).